The sequence spans 164 residues: S-ribosylhomocysteine lyase (164 aa).

Residues histidine 61, histidine 65, and cysteine 131 each coordinate Fe cation.

It belongs to the LuxS family. Homodimer. Fe cation is required as a cofactor.

It carries out the reaction S-(5-deoxy-D-ribos-5-yl)-L-homocysteine = (S)-4,5-dihydroxypentane-2,3-dione + L-homocysteine. Its function is as follows. Involved in the synthesis of autoinducer 2 (AI-2) which is secreted by bacteria and is used to communicate both the cell density and the metabolic potential of the environment. The regulation of gene expression in response to changes in cell density is called quorum sensing. Catalyzes the transformation of S-ribosylhomocysteine (RHC) to homocysteine (HC) and 4,5-dihydroxy-2,3-pentadione (DPD). This Bifidobacterium longum subsp. infantis (strain ATCC 15697 / DSM 20088 / JCM 1222 / NCTC 11817 / S12) protein is S-ribosylhomocysteine lyase.